The primary structure comprises 657 residues: Glycogen debranching enzyme (657 aa).

Asp336 (nucleophile) is an active-site residue. Glu371 functions as the Proton donor in the catalytic mechanism. Positions 460–479 are disordered; the sequence is ANGEENRDGTNNNYSNNHGK.

The protein belongs to the glycosyl hydrolase 13 family.

It catalyses the reaction Hydrolysis of (1-&gt;6)-alpha-D-glucosidic linkages to branches with degrees of polymerization of three or four glucose residues in limit dextrin.. Its pathway is glycan degradation; glycogen degradation. In terms of biological role, removes maltotriose and maltotetraose chains that are attached by 1,6-alpha-linkage to the limit dextrin main chain, generating a debranched limit dextrin. The sequence is that of Glycogen debranching enzyme from Escherichia coli (strain SMS-3-5 / SECEC).